The following is an 88-amino-acid chain: Small ribosomal subunit protein uS17 (88 aa).

Belongs to the universal ribosomal protein uS17 family. In terms of assembly, part of the 30S ribosomal subunit.

Functionally, one of the primary rRNA binding proteins, it binds specifically to the 5'-end of 16S ribosomal RNA. The protein is Small ribosomal subunit protein uS17 of Syntrophotalea carbinolica (strain DSM 2380 / NBRC 103641 / GraBd1) (Pelobacter carbinolicus).